The chain runs to 409 residues: Salivary endonuclease (409 aa).

Positions M1–G20 are cleaved as a signal peptide. 2 N-linked (GlcNAc...) asparagine glycosylation sites follow: N37 and N102. H216 acts as the Proton acceptor in catalysis. Residue N246 coordinates Mg(2+). N-linked (GlcNAc...) asparagine glycosylation is found at N351 and N381.

This sequence belongs to the DNA/RNA non-specific endonuclease family. Requires Mg(2+) as cofactor. As to expression, salivary gland.

Its subcellular location is the secreted. Its function is as follows. Hydrolyzes single-stranded and double-stranded DNA with little sequence specificity. Inhibits contact pathway of blood coagulation in the host by preventing activation of coagulation factor XII (F12) triggered by soluble DNA. Modestly up-regulates expression of CSF2, CXCL1 and CXCL8 in cultured human dermal microvascular endothelial cells. At higher doses promotes host neutrophil recruitment at the injection site in mouse model. Functionally, (Microbial infection) Increases Leishmania major survival in the host by disrupting parasite-induced neutrophil extracellular traps. Exacerbates L.major parasite infectivity and increases cutaneous lesions in mouse model. The chain is Salivary endonuclease from Lutzomyia longipalpis (Sand fly).